The primary structure comprises 312 residues: Olfactory receptor 2H2 (312 aa).

Topologically, residues 1–23 (MVNQSSTPGFLLLGFSEHPGLER) are extracellular. An N-linked (GlcNAc...) asparagine glycan is attached at Asn3. A helical transmembrane segment spans residues 24-47 (TLFVVVLTSYLLTLVGNTLIILLS). Residues 48-55 (ALDPKLHS) are Cytoplasmic-facing. The chain crosses the membrane as a helical span at residues 56-77 (PMYFFLSNLSFLDLCFTTSCVP). The Extracellular segment spans residues 78 to 98 (QMLVNLWGPKKTISFLDCSVQ). An intrachain disulfide couples Cys95 to Cys187. A helical transmembrane segment spans residues 99–118 (IFIFLSLGTTECILLTVMAF). Over 119–137 (DRYVAVCQPLHYATIIHPR) the chain is Cytoplasmic. A helical membrane pass occupies residues 138 to 156 (LCWQLASVAWVIGLVESVV). At 157-193 (QTPSTLHLPFCPDRQVDDFVCEVPALIRLSCEDTSYN) the chain is on the extracellular side. The chain crosses the membrane as a helical span at residues 194–217 (EIQVAVASVFILVVPLSLILVSYG). Residues 218–234 (AITWAVLRINSAKGRRK) are Cytoplasmic-facing. Residues 235-257 (AFGTCSSHLTVVTLFYSSVIAVY) traverse the membrane as a helical segment. Residues 258-270 (LQPKNPYAQERGK) lie on the Extracellular side of the membrane. Residues 271 to 290 (FFGLFYAVGTPSLNPLIYTL) traverse the membrane as a helical segment. At 291 to 312 (RNKEVTRAFRRLLGKEMGLTQS) the chain is on the cytoplasmic side.

It belongs to the G-protein coupled receptor 1 family.

It is found in the cell membrane. Functionally, odorant receptor. The sequence is that of Olfactory receptor 2H2 (OR2H2) from Homo sapiens (Human).